The chain runs to 157 residues: Root allergen protein (157 aa).

It belongs to the BetVI family.

This is Root allergen protein from Taraxacum officinale (Common dandelion).